A 588-amino-acid chain; its full sequence is Disabled homolog 1 (588 aa).

The disordered stretch occupies residues 1-26; that stretch reads MSTETELQVAVKTSAKKDSRKKGQDR. The span at 15 to 26 shows a compositional bias: basic and acidic residues; it reads AKKDSRKKGQDR. Residues 36–189 enclose the PID domain; that stretch reads KGEGVRYKAK…CEQAVYQTIL (154 aa). Tyr-198, Tyr-220, and Tyr-232 each carry phosphotyrosine. Disordered regions lie at residues 224 to 243, 420 to 444, 451 to 470, and 502 to 588; these read TSQKKEGVYDVPKSQPNSQP, LATVPGTNDSARSSPQSDKPRQKMG, FQMVQPPPVPSRKPDQPSLT, and LTPV…QDGS. The segment covering 424-436 has biased composition (polar residues); the sequence is PGTNDSARSSPQS. Composition is skewed to low complexity over residues 503 to 512 and 523 to 534; these read TPVTSTTPST and SSPSKSSASHVS. The residue at position 524 (Ser-524) is a Phosphoserine; by CDK5. The span at 537–546 shows a compositional bias: acidic residues; it reads TADDIFEEGF.

In terms of assembly, associates with the SH2 domains of SRC, FYN and ABL. Interacts (phosphorylated on tyrosine residues) with CRK and CRKL (via respective SH2 domain). Interacts with SIAH1, LRP8 and VLDLR. Interacts with LRP1. Interacts with APLP1 (via NPXY motif). Interacts with DAB2IP. Interacts with ZSWIM8. Phosphorylated by FYN on Tyr-198 and Tyr-220 upon reelin induction in embryonic neurons. Also found phosphorylated on Tyr-232 upon reelin induction. Also phosphorylated on Ser-524 independently of reelin signaling. Post-translationally, ubiquitinated by various cullin-5-RING E3 ubiquitin-protein ligase complexes (ECS complexes) following ligand-binding and phosphorylation, leading to its degradation. Ubiquitinated by the ECS(SOCS7) complex in the cortical plate of the developing cerebral cortex following ligand-binding and phosphorylation by FYN, leading to its degradation by the proteasome. Recognized by ZSWIM8 through a disorder targets misorder mechanism that eliminates misfolded DAB1 via ubiquitination and proteasomal degradation. As to expression, expressed mainly in brain. Specifically expressin in cortical neurons.

Its subcellular location is the cytoplasm. Functionally, signaling adapter of the reelin-mediated signaling pathway, which regulates the migration and differentiation of postmitotic neurons during brain development. Mediates intracellular transduction of Reelin signaling following reelin (RELN)-binding to its receptor: acts by docking proteins through its phosphotyrosine residues and PID domain. The sequence is that of Disabled homolog 1 from Mus musculus (Mouse).